The primary structure comprises 262 residues: tRNA pseudouridine synthase A (262 aa).

Catalysis depends on D52, which acts as the Nucleophile. Position 103 (Y103) interacts with substrate.

It belongs to the tRNA pseudouridine synthase TruA family.

It carries out the reaction uridine(38/39/40) in tRNA = pseudouridine(38/39/40) in tRNA. Its function is as follows. Formation of pseudouridine at positions 38, 39 and 40 in the anticodon stem and loop of transfer RNAs. The chain is tRNA pseudouridine synthase A from Methanococcus maripaludis (strain DSM 14266 / JCM 13030 / NBRC 101832 / S2 / LL).